Consider the following 514-residue polypeptide: Probable type III restriction-modification enzyme HindVIP Res subunit (514 aa).

The protein belongs to the type III restriction-modification system Res protein family. As to quaternary structure, contains two different subunits: Res and Mod. Mg(2+) is required as a cofactor. The cofactor is S-adenosyl-L-methionine.

It carries out the reaction Endonucleolytic cleavage of DNA to give specific double-stranded fragments with terminal 5'-phosphates.. A type III restriction enzyme that recognizes 2 inversely oriented double-stranded sequences 5'-CGAAT-3' and cleaves 25-27 base pairs downstream. After binding to one recognition site undergoes random one-dimensional diffusion along DNA until it collides with a stationary enzyme bound to the second DNA site, which is when DNA cleavage occurs. DNA restriction requires both the Res and Mod subunits. This is Probable type III restriction-modification enzyme HindVIP Res subunit from Haemophilus influenzae (strain ATCC 51907 / DSM 11121 / KW20 / Rd).